A 512-amino-acid polypeptide reads, in one-letter code: Chlorogenic acid esterase (512 aa).

An N-terminal signal peptide occupies residues 1 to 18 (MLLRLCIIATLLVSHCVA). Asparagine 47, asparagine 80, and asparagine 98 each carry an N-linked (GlcNAc...) asparagine glycan. A disulfide bond links cysteine 92 and cysteine 120. The active-site Acyl-ester intermediate is the serine 230. N-linked (GlcNAc...) asparagine glycosylation is present at asparagine 271. Cysteine 281 and cysteine 292 are disulfide-bonded. Residues asparagine 295, asparagine 322, and asparagine 328 are each glycosylated (N-linked (GlcNAc...) asparagine). The active-site Charge relay system is glutamate 351. N-linked (GlcNAc...) asparagine glycosylation is found at asparagine 391 and asparagine 402. Histidine 416 (charge relay system) is an active-site residue. Asparagine 474 is a glycosylation site (N-linked (GlcNAc...) asparagine).

This sequence belongs to the type-B carboxylesterase/lipase family.

It localises to the secreted. It carries out the reaction chlorogenate + H2O = L-quinate + (E)-caffeate + H(+). Functionally, extracellular chlorogenic acid esterase that releases caffeic acid from chlorogenic acid (CGA) contained in natural substrates such as apple marc and coffee pulp. Shows no activity towards 5-O-p-coumaroyl quinic acid, another quinic ester derivative, and rosmarinic acid, another caffeic ester derivative. The sequence is that of Chlorogenic acid esterase from Aspergillus niger.